A 577-amino-acid chain; its full sequence is Endopolyphosphatase (577 aa).

Residues 1-2 are Cytoplasmic-facing; that stretch reads MR. Residues 3–23 form a helical; Signal-anchor for type II membrane protein membrane-spanning segment; sequence PSVITVAVLFVQSTWASFAFG. The Vacuolar portion of the chain corresponds to 24 to 577; sequence NPMSMRNKAH…YIGSISDFED (554 aa). N363, N370, N375, and N399 each carry an N-linked (GlcNAc...) asparagine glycan. The tract at residues 430–460 is disordered; it reads SDYEIDKKKKKKKKNNKKKKKNKRKNIKPGP. Residues 437–456 are compositionally biased toward basic residues; sequence KKKKKKKNNKKKKKNKRKNI. N-linked (GlcNAc...) asparagine glycosylation is present at N481.

It belongs to the endopolyphosphatase PPN1 family. Requires a divalent metal cation as cofactor. Processing by proteases in the vacuole may be required for activation.

It is found in the vacuole membrane. It carries out the reaction [phosphate](n+1) + n H2O = (n+1) phosphate + n H(+). In terms of biological role, catalyzes the hydrolysis of inorganic polyphosphate (polyP) chains of many hundreds of phosphate residues into shorter lengths. The sequence is that of Endopolyphosphatase (ppn1) from Schizosaccharomyces pombe (strain 972 / ATCC 24843) (Fission yeast).